Here is a 191-residue protein sequence, read N- to C-terminus: Inosine triphosphate pyrophosphatase (191 aa).

An ITP-binding site is contributed by 9–14; that stretch reads TGNAKK. Glu-39 lines the Mg(2+) pocket. ITP-binding positions include Lys-51, 67–68, Lys-84, 143–146, Lys-166, and 171–172; these read DT, FGWD, and HR.

The protein belongs to the HAM1 NTPase family. In terms of assembly, homodimer. Mg(2+) is required as a cofactor. The cofactor is Mn(2+).

It localises to the cytoplasm. The catalysed reaction is ITP + H2O = IMP + diphosphate + H(+). It carries out the reaction dITP + H2O = dIMP + diphosphate + H(+). It catalyses the reaction XTP + H2O = XMP + diphosphate + H(+). In terms of biological role, pyrophosphatase that hydrolyzes non-canonical purine nucleotides such as inosine triphosphate (ITP), deoxyinosine triphosphate (dITP) or xanthosine 5'-triphosphate (XTP) to their respective monophosphate derivatives. The enzyme does not distinguish between the deoxy- and ribose forms. Probably excludes non-canonical purines from RNA and DNA precursor pools, thus preventing their incorporation into RNA and DNA and avoiding chromosomal lesions. The protein is Inosine triphosphate pyrophosphatase of Drosophila melanogaster (Fruit fly).